The following is an 872-amino-acid chain: Metabotropic glutamate receptor 2 (872 aa).

Residues 1–18 form the signal peptide; the sequence is MESLLGFLALLLLWGAVA. The Extracellular portion of the chain corresponds to 19 to 567; it reads EGPAKKVLTL…QEYIRWGDAW (549 aa). Cysteine 50 and cysteine 92 are disulfide-bonded. The L-glutamate site is built by arginine 57, arginine 61, serine 145, alanine 166, and threonine 168. 2 N-linked (GlcNAc...) asparagine glycosylation sites follow: asparagine 203 and asparagine 286. Disulfide bonds link cysteine 234-cysteine 518, cysteine 355-cysteine 362, cysteine 400-cysteine 407, cysteine 500-cysteine 519, cysteine 504-cysteine 522, cysteine 525-cysteine 537, and cysteine 540-cysteine 553. Aspartate 295 provides a ligand contact to L-glutamate. The N-linked (GlcNAc...) asparagine glycan is linked to asparagine 338. Residue lysine 377 participates in L-glutamate binding. Asparagine 402 carries N-linked (GlcNAc...) asparagine glycosylation. An N-linked (GlcNAc...) asparagine glycan is attached at asparagine 547. A helical membrane pass occupies residues 568–590; it reads AVGPVTIACLGALATLFVLGVFV. Residues 591 to 604 are Cytoplasmic-facing; the sequence is RHNATPVVKASGRE. The chain crosses the membrane as a helical span at residues 605–625; it reads LCYILLGGVFLCYCMTFVFIA. Residues 626–636 lie on the Extracellular side of the membrane; sequence KPSTAVCTLRR. Cysteine 632 and cysteine 721 are disulfide-bonded. Residues 637–655 traverse the membrane as a helical segment; the sequence is LGLGTAFSVCYSALLTKTN. At 656 to 679 the chain is on the cytoplasmic side; that stretch reads RIARIFGGAREGAQRPRFISPASQ. The interval 677–685 is important for interaction with HTR2A; that stretch reads ASQVAICLA. Residues 680–700 traverse the membrane as a helical segment; the sequence is VAICLALISGQLLIVAAWLVV. The Extracellular segment spans residues 701–725; that stretch reads EAPGTGKETAPERREVVTLRCNHRD. A helical membrane pass occupies residues 726-747; the sequence is ASMLGSLAYNVLLIALCTLYAF. Topologically, residues 748 to 760 are cytoplasmic; it reads KTRKCPENFNEAK. Residues 761–783 form a helical membrane-spanning segment; it reads FIGFTMYTTCIIWLAFLPIFYVT. Topologically, residues 784–793 are extracellular; sequence SSDYRVQTTT. Residues 794–819 form a helical membrane-spanning segment; that stretch reads MCVSVSLSGSVVLGCLFAPKLHIILF. Residues 820–872 are Cytoplasmic-facing; the sequence is QPQKNVVSHRAPTSRFGSAAPRASANLGQGSGSQFVPTVCNGREVVDSTTSSL.

Belongs to the G-protein coupled receptor 3 family. As to quaternary structure, forms heterodimers with GRM3 or GRM4. Interacts with GNAI1. Interacts with TAMALIN. Interacts with HTR2A. As to expression, is widely distributed in the CNS and prominent expression is seen in Golgi cells of the cerebellum and some particular neuronal cells in other brain regions.

It localises to the cell membrane. It is found in the synapse. The protein resides in the cell projection. Its subcellular location is the dendrite. Its function is as follows. Dimeric G protein-coupled receptor which is activated by the excitatory neurotransmitter L-glutamate. Plays critical roles in modulating synaptic transmission and neuronal excitability. Upon activation by glutamate, inhibits presynaptic calcium channels, reducing further glutamate release and dampening excitatory signaling. Mechanistically, ligand binding causes a conformation change that triggers signaling via guanine nucleotide-binding proteins (G proteins) and modulates the activity of down-stream effectors, such as adenylate cyclase. May mediate suppression of neurotransmission or may be involved in synaptogenesis or synaptic stabilization. In Rattus norvegicus (Rat), this protein is Metabotropic glutamate receptor 2 (Grm2).